The primary structure comprises 486 residues: Probable glycine dehydrogenase (decarboxylating) subunit 2 (486 aa).

N6-(pyridoxal phosphate)lysine is present on Lys-269.

Belongs to the GcvP family. C-terminal subunit subfamily. The glycine cleavage system is composed of four proteins: P, T, L and H. In this organism, the P 'protein' is a heterodimer of two subunits. Requires pyridoxal 5'-phosphate as cofactor.

The enzyme catalyses N(6)-[(R)-lipoyl]-L-lysyl-[glycine-cleavage complex H protein] + glycine + H(+) = N(6)-[(R)-S(8)-aminomethyldihydrolipoyl]-L-lysyl-[glycine-cleavage complex H protein] + CO2. Its function is as follows. The glycine cleavage system catalyzes the degradation of glycine. The P protein binds the alpha-amino group of glycine through its pyridoxal phosphate cofactor; CO(2) is released and the remaining methylamine moiety is then transferred to the lipoamide cofactor of the H protein. This is Probable glycine dehydrogenase (decarboxylating) subunit 2 from Chlorobaculum tepidum (strain ATCC 49652 / DSM 12025 / NBRC 103806 / TLS) (Chlorobium tepidum).